The chain runs to 198 residues: MTVAEMSASRSRSLRWFGVAAGLLLLQIVILYAMGRIPICECGYVKLFEPGVNTPGNSQHLADWYTPSHIIHGFLFYWFAWLLFRNKPFSMRLSFAVLIEAAWELLENSPIIIDRYRTATTALGYTGDSILNSAMDTVFMALGFLFAARVPVWLTVVIAIFFEIFTGWLIRDNLTLNVVMLVWPVDVIKEWQNALPQM.

3 consecutive transmembrane segments (helical) span residues 14–34, 64–84, and 150–170; these read LRWFGVAAGLLLLQIVILYAM, WYTPSHIIHGFLFYWFAWLLF, and VPVWLTVVIAIFFEIFTGWLI.

It belongs to the UPF0314 family.

The protein localises to the cell membrane. The chain is UPF0314 protein Atu8092 from Agrobacterium fabrum (strain C58 / ATCC 33970) (Agrobacterium tumefaciens (strain C58)).